A 391-amino-acid chain; its full sequence is Processive diacylglycerol beta-glucosyltransferase (391 aa).

Belongs to the glycosyltransferase 28 family. UgtP subfamily.

It is found in the cell membrane. The enzyme catalyses a 1,2-diacyl-3-O-(beta-D-glucopyranosyl)-sn-glycerol + UDP-alpha-D-glucose = a 1,2-diacyl-3-O-(beta-D-Glc-(1-&gt;6)-beta-D-Glc)-sn-glycerol + UDP + H(+). It catalyses the reaction a 1,2-diacyl-sn-glycerol + UDP-alpha-D-glucose = a 1,2-diacyl-3-O-(beta-D-glucopyranosyl)-sn-glycerol + UDP + H(+). It functions in the pathway glycolipid metabolism; diglucosyl-diacylglycerol biosynthesis. Functionally, processive glucosyltransferase involved in the biosynthesis of both the bilayer- and non-bilayer-forming membrane glucolipids. Is able to successively transfer two glucosyl residues to diacylglycerol (DAG), thereby catalyzing the formation of beta-monoglucosyl-DAG (3-O-(beta-D-glucopyranosyl)-1,2-diacyl-sn-glycerol) and beta-diglucosyl-DAG (3-O-(beta-D-glucopyranosyl-beta-(1-&gt;6)-D-glucopyranosyl)-1,2-diacyl-sn-glycerol). Beta-diglucosyl-DAG is the predominant glycolipid found in Bacillales and is also used as a membrane anchor for lipoteichoic acid (LTA). The sequence is that of Processive diacylglycerol beta-glucosyltransferase from Staphylococcus epidermidis (strain ATCC 35984 / DSM 28319 / BCRC 17069 / CCUG 31568 / BM 3577 / RP62A).